Reading from the N-terminus, the 124-residue chain is Small ribosomal subunit protein bS16 (124 aa).

A compositionally biased stretch (basic and acidic residues) spans 84 to 110; it reads EKAERKNLKKGEPGKAAKERAEKRAAR. The disordered stretch occupies residues 84–124; the sequence is EKAERKNLKKGEPGKAAKERAEKRAAREAAANAPAEEAASE. Residues 111-124 are compositionally biased toward low complexity; sequence EAAANAPAEEAASE.

It belongs to the bacterial ribosomal protein bS16 family.

This is Small ribosomal subunit protein bS16 from Paracoccus denitrificans (strain Pd 1222).